The following is a 116-amino-acid chain: Large ribosomal subunit protein bL17 (116 aa).

This sequence belongs to the bacterial ribosomal protein bL17 family. In terms of assembly, part of the 50S ribosomal subunit. Contacts protein L32.

The polypeptide is Large ribosomal subunit protein bL17 (Sulfurovum sp. (strain NBC37-1)).